Here is a 243-residue protein sequence, read N- to C-terminus: Amphiregulin (243 aa).

An N-terminal signal peptide occupies residues 1 to 24 (MRTPSLSLALSVLSLLVLGSGHYA). Residues 25-96 (AGLELNGTSS…IVDDSVRVEQ (72 aa)) constitute a propeptide that is removed on maturation. N-linked (GlcNAc...) asparagine glycosylation is present at Asn-30. Residues 55 to 67 (STISEMPSGSELS) are compositionally biased toward polar residues. Disordered regions lie at residues 55–75 (STIS…DYSE) and 98–135 (IKPK…KKKN). Residues 98-113 (IKPKENKTEGEKSSEK) are compositionally biased toward basic and acidic residues. N-linked (GlcNAc...) asparagine glycosylation is present at Asn-103. Positions 114-135 (PKRKKKGGKGGKGRRNRKKKKN) are enriched in basic residues. The EGF-like domain maps to 133–173 (KKNPCAAKFQNFCIHGECRYIENLEVVTCHCHQDYFGERCG). Intrachain disulfides connect Cys-137–Cys-150, Cys-145–Cys-161, and Cys-163–Cys-172. Residues 190–213 (IALAAIIVFVSAVSVAAIGIITAV) form a helical membrane-spanning segment. Asn-236 carries N-linked (GlcNAc...) asparagine glycosylation.

The protein belongs to the amphiregulin family. The immature precursor interacts with CNIH.

Its subcellular location is the membrane. Functionally, ligand of the EGF receptor/EGFR. Autocrine growth factor as well as a mitogen for a broad range of target cells including astrocytes, Schwann cells and fibroblasts. This is Amphiregulin (Areg) from Rattus norvegicus (Rat).